Reading from the N-terminus, the 338-residue chain is Plasminogen (338 aa).

The Kringle 5 domain occupies 9–88 (CMLGIGKGYQ…LFDYCDVPQC (80 aa)). Intrachain disulfides connect Cys9-Cys88, Cys30-Cys71, Cys59-Cys83, Cys95-Cys213, Cys105-Cys113, Cys135-Cys151, Cys227-Cys294, Cys257-Cys273, and Cys284-Cys312. The Peptidase S1 domain occupies 109 to 336 (IVGGCVAIAH…FINWIERIMQ (228 aa)). Ser125 carries the phosphoserine modification. Residues His150 and Asp193 each act as charge relay system in the active site. Catalysis depends on Ser288, which acts as the Charge relay system.

The protein belongs to the peptidase S1 family. Plasminogen subfamily. As to quaternary structure, interacts with CSPG4 and AMOT. Interacts (via the Kringle domains) with HRG; the interaction tethers PLG to the cell surface and enhances its activation. Interacts (via Kringle 4 domain) with ADA; the interaction stimulates PLG activation when in complex with DPP4. Angiostatin: Interacts with ATP5F1A; the interaction inhibits most of the angiogenic effects of angiostatin.

Its subcellular location is the secreted. The enzyme catalyses Preferential cleavage: Lys-|-Xaa &gt; Arg-|-Xaa, higher selectivity than trypsin. Converts fibrin into soluble products.. Its activity is regulated as follows. Converted into plasmin by plasminogen activators, both plasminogen and its activator being bound to fibrin. Activated with catalytic amounts of streptokinase. Functionally, plasmin dissolves the fibrin of blood clots and acts as a proteolytic factor in a variety of other processes including embryonic development, tissue remodeling, tumor invasion, and inflammation. In ovulation, weakens the walls of the Graafian follicle. It activates the urokinase-type plasminogen activator, collagenases and several complement zymogens, such as C1, C4 and C5. Cleavage of fibronectin and laminin leads to cell detachment and apoptosis. Also cleaves fibrin, thrombospondin and von Willebrand factor. Its role in tissue remodeling and tumor invasion may be modulated by CSPG4. Binds to cells. In Equus caballus (Horse), this protein is Plasminogen (PLG).